The chain runs to 488 residues: Solanidine UDP-glucose glucosyltransferase 1 (488 aa).

Residue histidine 23 is the Proton acceptor of the active site. Residue histidine 23 coordinates an anthocyanidin. Residue aspartate 127 is the Charge relay of the active site. UDP-alpha-D-glucose contacts are provided by valine 352, glutamine 354, histidine 369, asparagine 373, serine 374, and glutamate 377. An an anthocyanidin-binding site is contributed by alanine 392. Residues aspartate 393 and glutamine 394 each contribute to the UDP-alpha-D-glucose site.

It belongs to the UDP-glycosyltransferase family. As to expression, expressed in the shoot apical meristem (SAM) and tuber.

It carries out the reaction solasodine + UDP-alpha-D-glucose = solasodine 3-beta-D-glucoside + UDP + H(+). It catalyses the reaction solanidine + UDP-alpha-D-glucose = solanidine 3-O-beta-D-glucopyranoside + UDP + H(+). The enzyme catalyses tomatidine + UDP-alpha-D-glucose = tomatidine 3-O-beta-D-glucopyranoside + UDP + H(+). In terms of biological role, glucosyltransferase involved in the glucosylation of the steroidal alkaloid aglycons solanidine, solasodine and tomatidine to produce their corresponding glycoalkaloids. The chain is Solanidine UDP-glucose glucosyltransferase 1 from Solanum tuberosum (Potato).